A 516-amino-acid chain; its full sequence is Probable fucosyltransferase 8 (516 aa).

Residues 5–25 (ITVVTCLFLLSVMQLSFFNIF) form a helical; Signal-anchor for type II membrane protein membrane-spanning segment. Over 26-516 (NYQLLDATTN…ITGLKLVDSN (491 aa)) the chain is Lumenal. Residues Asn35, Asn116, Asn211, Asn362, and Asn463 are each glycosylated (N-linked (GlcNAc...) asparagine).

Belongs to the glycosyltransferase 37 family. Expressed in leaves and stems.

Its subcellular location is the golgi apparatus. The protein resides in the golgi stack membrane. It functions in the pathway protein modification; protein glycosylation. In terms of biological role, may be involved in cell wall biosynthesis. May act as a fucosyltransferase. The chain is Probable fucosyltransferase 8 (FUT8) from Arabidopsis thaliana (Mouse-ear cress).